Consider the following 57-residue polypeptide: Major exported protein (57 aa).

This sequence belongs to the hcp1 family. In terms of assembly, homodimer.

Its subcellular location is the secreted. In Pseudomonas syringae pv. ribicola, this protein is Major exported protein.